The chain runs to 88 residues: UPF0335 protein NGR_c28390 (88 aa).

Belongs to the UPF0335 family.

In Sinorhizobium fredii (strain NBRC 101917 / NGR234), this protein is UPF0335 protein NGR_c28390.